The following is a 170-amino-acid chain: MKMNQLLEAFWYILPAYFANSSPVVLGGGTPIDFGKKWRDGRRILGDGKTWRGFFGGLIVGTIIGIVQYFLLPEYYGSLGIAIELAFLLSLGTLVGDLIGSFIKRRLNMPRGYPAVGLDQWGFLIAALCFAYPVKTIPTGEVLFLLVITPLIHWGANIFAYKMGWKKVPW.

Helical transmembrane passes span 9–29 (AFWYILPAYFANSSPVVLGGG), 53–73 (GFFGGLIVGTIIGIVQYFLLP), 79–99 (LGIAIELAFLLSLGTLVGDLI), 114–134 (PAVGLDQWGFLIAALCFAYPV), and 140–160 (GEVLFLLVITPLIHWGANIFA).

The protein belongs to the CDP-archaeol synthase family. The cofactor is Mg(2+).

It localises to the cell membrane. It carries out the reaction 2,3-bis-O-(geranylgeranyl)-sn-glycerol 1-phosphate + CTP + H(+) = CDP-2,3-bis-O-(geranylgeranyl)-sn-glycerol + diphosphate. The protein operates within membrane lipid metabolism; glycerophospholipid metabolism. Catalyzes the formation of CDP-2,3-bis-(O-geranylgeranyl)-sn-glycerol (CDP-archaeol) from 2,3-bis-(O-geranylgeranyl)-sn-glycerol 1-phosphate (DGGGP) and CTP. This reaction is the third ether-bond-formation step in the biosynthesis of archaeal membrane lipids. This Pyrococcus horikoshii (strain ATCC 700860 / DSM 12428 / JCM 9974 / NBRC 100139 / OT-3) protein is CDP-archaeol synthase.